The primary structure comprises 88 residues: Small ribosomal subunit protein uS17 (88 aa).

Belongs to the universal ribosomal protein uS17 family. As to quaternary structure, part of the 30S ribosomal subunit.

Its function is as follows. One of the primary rRNA binding proteins, it binds specifically to the 5'-end of 16S ribosomal RNA. The sequence is that of Small ribosomal subunit protein uS17 from Prochlorococcus marinus (strain MIT 9303).